Reading from the N-terminus, the 273-residue chain is MAKHLYKTPIPSTRKGTIDRQVKSNPRNNLIHGRHRCGKGRNSRGIITARHRGGGHKRLYRKIDFRRNQKDISGRIVTIEYDPNRNAYICLIHYGDGEKGYILHPRGAIIGDTIVSGTKVPISMGNALPLTDMPLGTAIHNIEITRGRGGQLARAAGAVAKLIAKEGKSATLRLPSGEVRLVSQNCLATVGQVGNVGVNQKSLGRAGSKCWLGKRPVVRGVVMNPVDHPHGGGEGKAPIGRKKPTTPWGYPALGRRTRKRKKYSDSFILRRRK.

2 disordered regions span residues 1 to 20 and 225 to 273; these read MAKH…TIDR and PVDH…RRRK.

It belongs to the universal ribosomal protein uL2 family. Part of the 50S ribosomal subunit.

It is found in the plastid. The protein localises to the chloroplast. The polypeptide is Large ribosomal subunit protein uL2cz/uL2cy (rpl2-A) (Oryza nivara (Indian wild rice)).